The following is a 575-amino-acid chain: V-type ATP synthase alpha chain (575 aa).

238-245 (GPFGAGKT) contacts ATP.

It belongs to the ATPase alpha/beta chains family.

The catalysed reaction is ATP + H2O + 4 H(+)(in) = ADP + phosphate + 5 H(+)(out). Produces ATP from ADP in the presence of a proton gradient across the membrane. The V-type alpha chain is a catalytic subunit. This is V-type ATP synthase alpha chain (atpA) from Borreliella burgdorferi (strain ATCC 35210 / DSM 4680 / CIP 102532 / B31) (Borrelia burgdorferi).